The sequence spans 882 residues: DNA mismatch repair protein MutS (882 aa).

Residues 1 to 22 (MTLPSDFPLEPPATNKDPHRDY) form a disordered region. 662–669 (GPNASGKS) serves as a coordination point for ATP.

This sequence belongs to the DNA mismatch repair MutS family.

In terms of biological role, this protein is involved in the repair of mismatches in DNA. It is possible that it carries out the mismatch recognition step. This protein has a weak ATPase activity. This is DNA mismatch repair protein MutS from Microcystis aeruginosa (strain NIES-843 / IAM M-2473).